Consider the following 365-residue polypeptide: Anhydro-N-acetylmuramic acid kinase (365 aa).

12 to 19 (GTSLDGID) serves as a coordination point for ATP.

Belongs to the anhydro-N-acetylmuramic acid kinase family.

The enzyme catalyses 1,6-anhydro-N-acetyl-beta-muramate + ATP + H2O = N-acetyl-D-muramate 6-phosphate + ADP + H(+). Its pathway is amino-sugar metabolism; 1,6-anhydro-N-acetylmuramate degradation. It functions in the pathway cell wall biogenesis; peptidoglycan recycling. In terms of biological role, catalyzes the specific phosphorylation of 1,6-anhydro-N-acetylmuramic acid (anhMurNAc) with the simultaneous cleavage of the 1,6-anhydro ring, generating MurNAc-6-P. Is required for the utilization of anhMurNAc either imported from the medium or derived from its own cell wall murein, and thus plays a role in cell wall recycling. The chain is Anhydro-N-acetylmuramic acid kinase from Rhizorhabdus wittichii (strain DSM 6014 / CCUG 31198 / JCM 15750 / NBRC 105917 / EY 4224 / RW1) (Sphingomonas wittichii).